The following is a 197-amino-acid chain: Holliday junction branch migration complex subunit RuvA (197 aa).

The interval 1–64 is domain I; the sequence is MYDYIKGIYK…DDSINLYGFF (64 aa). Residues 65–143 form a domain II region; it reads TEEERDMFNL…NDDIISDIDD (79 aa). Residues 144–154 form a flexible linker region; that stretch reads LDSISNFQLHS. The domain III stretch occupies residues 154 to 197; sequence SAEALEALMSLGYSQKESEKALKNVDKENSLEDIIKACLKYLMG.

This sequence belongs to the RuvA family. Homotetramer. Forms an RuvA(8)-RuvB(12)-Holliday junction (HJ) complex. HJ DNA is sandwiched between 2 RuvA tetramers; dsDNA enters through RuvA and exits via RuvB. An RuvB hexamer assembles on each DNA strand where it exits the tetramer. Each RuvB hexamer is contacted by two RuvA subunits (via domain III) on 2 adjacent RuvB subunits; this complex drives branch migration. In the full resolvosome a probable DNA-RuvA(4)-RuvB(12)-RuvC(2) complex forms which resolves the HJ.

It is found in the cytoplasm. The RuvA-RuvB-RuvC complex processes Holliday junction (HJ) DNA during genetic recombination and DNA repair, while the RuvA-RuvB complex plays an important role in the rescue of blocked DNA replication forks via replication fork reversal (RFR). RuvA specifically binds to HJ cruciform DNA, conferring on it an open structure. The RuvB hexamer acts as an ATP-dependent pump, pulling dsDNA into and through the RuvAB complex. HJ branch migration allows RuvC to scan DNA until it finds its consensus sequence, where it cleaves and resolves the cruciform DNA. The protein is Holliday junction branch migration complex subunit RuvA of Clostridium tetani (strain Massachusetts / E88).